A 565-amino-acid chain; its full sequence is MEQKIKFPRSQKVYLPGKLYPNIRVAMRKVEQVPSVSFEGEEKIATPNPEVYVYDTSGPFSDPSMSIDLKKGLPRLREEWIVGRGDVEQLPEITSEYGQMRRDDKSLDHLRFEHIALPYRAKKGEAITQMAYAKRGIITPEMEYVAIRENMNCEELGIETHITPEFVRKEIAEGHAVLPANINHPEAEPMIIGRNFLVKINTNIGNSATTSSIDEEVEKALWSCKWGGDTLMDLSTGENIHETREWIIRNCPVPVGTVPIYQALEKVNGVVEDLNWEIYRDTLIEQCEQGVDYFTIHAGIRRHNVHLADKRLCGIVSRGGSIMSKWCLVHDQESFLYEHFDDICDILAQYDVAVSLGDGLRPGSIHDANDEAQFAELDTMGELVLRAWEKNVQAFIEGPGHVPMHKIKENMERQIEKCHDAPFYTLGPLVTDIAPGYDHITSAIGAAQIGWLGTAMLCYVTPKEHLALPDKEDVRVGVITYKIAAHAADLAKGHPGAQVRDNALSKARYEFRWKDQFDLSLDPERAQGYFRAGHHIDGEYCTMCGPNFCAMRLSRDLKKNAKSDK.

Residues asparagine 203, methionine 232, tyrosine 261, histidine 297, 317-319 (SRG), 358-361 (DGLR), and glutamate 397 contribute to the substrate site. Histidine 401 contacts Zn(2+). Tyrosine 424 lines the substrate pocket. Histidine 465 provides a ligand contact to Zn(2+). Residues cysteine 541, cysteine 544, and cysteine 549 each coordinate [4Fe-4S] cluster.

It belongs to the ThiC family. It depends on [4Fe-4S] cluster as a cofactor.

It catalyses the reaction 5-amino-1-(5-phospho-beta-D-ribosyl)imidazole + S-adenosyl-L-methionine = 4-amino-2-methyl-5-(phosphooxymethyl)pyrimidine + CO + 5'-deoxyadenosine + formate + L-methionine + 3 H(+). The protein operates within cofactor biosynthesis; thiamine diphosphate biosynthesis. Catalyzes the synthesis of the hydroxymethylpyrimidine phosphate (HMP-P) moiety of thiamine from aminoimidazole ribotide (AIR) in a radical S-adenosyl-L-methionine (SAM)-dependent reaction. This Bacteroides thetaiotaomicron (strain ATCC 29148 / DSM 2079 / JCM 5827 / CCUG 10774 / NCTC 10582 / VPI-5482 / E50) protein is Phosphomethylpyrimidine synthase.